A 322-amino-acid chain; its full sequence is Transcription factor WRKY45-2 (322 aa).

Positions 67 to 110 are disordered; it reads GGEGSEVQSEVTCGGGASAGGKRKAPAANRKANCRRRTQQSSGN. The WRKY DNA-binding region spans 112–180; it reads VVVKNLDDGQ…YIGEHTCRDP (69 aa). The segment at 256–284 is disordered; sequence SDQEEVLSSLTPGSSAARGGGVAGPFGPD.

It belongs to the WRKY group III family. As to expression, expressed in aleurone cells.

It is found in the nucleus. Functionally, transcriptional activator involved in defense responses against pathogens. Acts as a positive regulator of defense responses against the rice blast fungus Magnaporthe oryzae. Acts as a positive regulator of defense responses against the bacterial blight Xanthomonas oryzae pv oryzae (Xoo) and the bacterial streak Xanthomonas oryzae pv oryzicola (Xoc). Acts as a positive regulator of abscisic acid (ABA) signaling that suppresses growth of seedlings. Acts as a negative regulator of salt stress response. Acts as a negative regulator of cold stress response. Acts as a negative regulator of drought stress response. In Oryza sativa subsp. indica (Rice), this protein is Transcription factor WRKY45-2.